The chain runs to 231 residues: MKQIVADSAIEEVEDGMILGLGSGSTAALMIKSLAEKIRSGKLKNIKGVPTSFQSEVLALELNIPLIDLASVPYIDLAIDGADEVDPDFQLIKGGGACHVREKLVASKANKLLIVIDESKLVQNLNQVFPLPVEVMPSAWKQVKDIISEMSGVSNLRMATKKAGPVVTDQGNLILDVLFDAGIRDPKDLEMRINNIPGVLENGLFVDLADKVLVGKIEDDVPVLFSPSRRS.

Substrate contacts are provided by residues S23–T26, D80–D83, and K93–G96. The active-site Proton acceptor is E102. Residue K120 coordinates substrate.

It belongs to the ribose 5-phosphate isomerase family. Homodimer.

The catalysed reaction is aldehydo-D-ribose 5-phosphate = D-ribulose 5-phosphate. Its pathway is carbohydrate degradation; pentose phosphate pathway; D-ribose 5-phosphate from D-ribulose 5-phosphate (non-oxidative stage): step 1/1. In terms of biological role, catalyzes the reversible conversion of ribose-5-phosphate to ribulose 5-phosphate. The protein is Ribose-5-phosphate isomerase A of Prochlorococcus marinus subsp. pastoris (strain CCMP1986 / NIES-2087 / MED4).